Reading from the N-terminus, the 313-residue chain is Porphobilinogen deaminase (313 aa).

An S-(dipyrrolylmethanemethyl)cysteine modification is found at Cys-242.

This sequence belongs to the HMBS family. In terms of assembly, monomer. The cofactor is dipyrromethane.

The catalysed reaction is 4 porphobilinogen + H2O = hydroxymethylbilane + 4 NH4(+). Its pathway is porphyrin-containing compound metabolism; protoporphyrin-IX biosynthesis; coproporphyrinogen-III from 5-aminolevulinate: step 2/4. Its function is as follows. Tetrapolymerization of the monopyrrole PBG into the hydroxymethylbilane pre-uroporphyrinogen in several discrete steps. The polypeptide is Porphobilinogen deaminase (Pectobacterium atrosepticum (strain SCRI 1043 / ATCC BAA-672) (Erwinia carotovora subsp. atroseptica)).